Here is a 689-residue protein sequence, read N- to C-terminus: Solute carrier family 22 member 23 (689 aa).

Disordered regions lie at residues 1–55 (MAID…PLPA) and 162–188 (TASW…GKGN). A glycan (N-linked (GlcNAc...) asparagine) is linked at asparagine 24. The span at 165 to 177 (WGTTSNRSNSSDT) shows a compositional bias: polar residues. 2 helical membrane passes run 229–249 (FSLL…ADWV) and 253–273 (PVLL…ALSV). N-linked (GlcNAc...) asparagine glycosylation is present at asparagine 274. 8 helical membrane passes run 283 to 303 (FFEG…RIEL), 310 to 330 (FIIT…MPGL), 339 to 359 (VLQA…SIFP), 466 to 486 (TMAS…KFLG), 489 to 509 (GGLL…LGLL), 541 to 561 (IAFS…SVFF), 572 to 592 (CGGL…APII), and 601 to 621 (FLHH…ILLL).

It belongs to the major facilitator (TC 2.A.1) superfamily. Organic cation transporter (TC 2.A.1.19) family.

The protein localises to the membrane. The chain is Solute carrier family 22 member 23 (Slc22a23) from Mus musculus (Mouse).